A 1203-amino-acid chain; its full sequence is Potassium/sodium hyperpolarization-activated cyclic nucleotide-gated channel 4 (1203 aa).

A disordered region spans residues methionine 1–proline 182. Topologically, residues methionine 1–phenylalanine 263 are cytoplasmic. Residues methionine 26–glycine 36 are compositionally biased toward acidic residues. The segment covering serine 105 to serine 117 has biased composition (gly residues). Basic and acidic residues predominate over residues histidine 121–alanine 133. Serine 138 is modified (phosphoserine). The span at alanine 163 to proline 174 shows a compositional bias: pro residues. The interval glycine 209–aspartate 260 is involved in subunit assembly. Residues tyrosine 264–phenylalanine 286 traverse the membrane as a helical segment. Topologically, residues phenylalanine 287–threonine 293 are extracellular. The helical transmembrane segment at proline 294–phenylalanine 314 threads the bilayer. Residues arginine 315–lysine 336 are Cytoplasmic-facing. The helical transmembrane segment at tyrosine 337 to valine 359 threads the bilayer. The Extracellular segment spans residues glutamate 360–arginine 378. A helical; Voltage-sensor membrane pass occupies residues phenylalanine 379–histidine 399. Residues glutamine 400–serine 413 lie on the Cytoplasmic side of the membrane. Residues alanine 414–glutamine 436 form a helical membrane-spanning segment. Residues phenylalanine 437–glutamine 464 lie on the Extracellular side of the membrane. A glycan (N-linked (GlcNAc...) asparagine) is linked at asparagine 458. Residues tyrosine 465–proline 486 constitute an intramembrane region (pore-forming). Topologically, residues valine 487 to aspartate 491 are extracellular. Residues valine 492–isoleucine 517 form a helical membrane-spanning segment. Topologically, residues glutamine 518–leucine 1203 are cytoplasmic. Residues tyrosine 559, lysine 562, phenylalanine 564, and glutamate 566 each coordinate 3',5'-cyclic GMP. 3',5'-cyclic AMP contacts are provided by glycine 659, glutamate 660, cysteine 662, arginine 669, threonine 670, valine 673, and arginine 710. 3 disordered regions span residues alanine 836–serine 856, glycine 870–alanine 897, and leucine 918–leucine 1203. Composition is skewed to low complexity over residues leucine 918–proline 941 and arginine 966–leucine 986. Residues glutamate 995–proline 1004 show a composition bias toward pro residues. The span at serine 1005–proline 1028 shows a compositional bias: low complexity. A compositionally biased stretch (pro residues) spans glycine 1029 to proline 1042. A compositionally biased stretch (low complexity) spans alanine 1045 to proline 1056. Residues serine 1105 and serine 1108 each carry the phosphoserine modification. Residues alanine 1122 to proline 1137 show a composition bias toward gly residues.

The protein belongs to the potassium channel HCN family. As to quaternary structure, homotetramer. The channel assemble into homotetramers or heteromeric complexes that contains of four pore-forming subunits. Interacts with PEX5L with a 4:4 HCN4:PEX5L stoichiometry; reduces the effects of cAMP on the voltage-dependence and rate of activation. Interacts with IRAG1; regulates HCN4 channel activity. Interacts with IRAG2; regulates HCN4 channel activity. S-palmitoylated. Highly expressed in thalamus, testis and in heart, both in ventricle and atrium. Detected at much lower levels in amygdala, substantia nigra, cerebellum and hippocampus.

It localises to the cell membrane. It carries out the reaction K(+)(in) = K(+)(out). It catalyses the reaction Na(+)(in) = Na(+)(out). Activated by cAMP and to a lesser extent by cGMP and cCMP. cAMP binding causes a conformation change that leads to the assembly of an active tetramer and channel opening. Binding of cAMP removes a tonic inhibition conferred by cyclic nucleotide-binding domain (CNBD) on channel opening. Cyclic dinucleotides can modulate HCN4 channel; cyclic dinucleotides acting as potent antagonists of cAMP. Inhibited by extracellular Cs(+) ions. Auxiliary subunits can also regulate HCN4 channel. IRAG1 causes a gain-of-function by shifting HCN4 activation to more depolarized membrane potentials in the absence of cAMP. In contrast, IRAG2 causes a loss-of-function by inhibiting cAMP-dependent potentiation of HCN4 activation. Its function is as follows. Hyperpolarization-activated ion channel that are permeable to Na(+) and K(+) ions with very slow activation and inactivation. Exhibits higher selectivity for K(+) over Na(+) ions. Contributes to the native pacemaker currents in heart (If) that regulate the rhythm of heart beat. Contributes to the native pacemaker currents in neurons (Ih). May mediate responses to sour stimuli. The polypeptide is Potassium/sodium hyperpolarization-activated cyclic nucleotide-gated channel 4 (Homo sapiens (Human)).